We begin with the raw amino-acid sequence, 801 residues long: Probable inorganic carbon transporter subunit DabA (801 aa).

Cys298, Asp300, His481, and Cys496 together coordinate Zn(2+). The interval 575–596 is disordered; sequence RENAAAERAESMGSDASSGVSE.

Belongs to the inorganic carbon transporter (TC 9.A.2) DabA family. Forms a complex with DabB. It depends on Zn(2+) as a cofactor.

The protein resides in the cell membrane. Functionally, part of an energy-coupled inorganic carbon pump. This is Probable inorganic carbon transporter subunit DabA from Haloarcula marismortui (strain ATCC 43049 / DSM 3752 / JCM 8966 / VKM B-1809) (Halobacterium marismortui).